The chain runs to 681 residues: PTS system glucose-specific EIICBA component (681 aa).

In terms of domain architecture, PTS EIIC type-1 spans 3-414 (KKLFGQLQRI…LKYKTPGRED (412 aa)). A run of 10 helical transmembrane segments spans residues 16–36 (LMLPVAILPAAGLLLAIGTAM), 73–93 (MIFALGVAIGLAGGDGVAAIA), 126–146 (ILGIPTLQTGVFGGIIIGALA), 170–190 (FVPIMMATTSFILAFPMALIW), 199–219 (AFSTGLLDSNTGVAVFLFGFI), 273–293 (FMQGEFPVMMFGLPAAALAIY), 303–323 (VVAGLMGSAALTSFLTGITEP), 328–348 (FLFVAPLLFFIHAVLDGLSFL), 355–375 (LHLGYTFSGGFIDYFLLGILP), and 383–403 (VIPVGLVYAVIYYFVFRFLIV). The PTS EIIB type-1 domain maps to 425–506 (TELPYAVLEA…QQIMNGQVVE (82 aa)). Catalysis depends on C447, which acts as the Phosphocysteine intermediate; for EIIB activity. The 105-residue stretch at 551–655 (DQVFSEKMMG…SDITPIIVTQ (105 aa)) folds into the PTS EIIA type-1 domain. The Tele-phosphohistidine intermediate; for EIIA activity role is filled by H603.

Its subcellular location is the cell membrane. The enzyme catalyses N(pros)-phospho-L-histidyl-[protein] + D-glucose(out) = D-glucose 6-phosphate(in) + L-histidyl-[protein]. The phosphoenolpyruvate-dependent sugar phosphotransferase system (sugar PTS), a major carbohydrate active transport system, catalyzes the phosphorylation of incoming sugar substrates concomitantly with their translocation across the cell membrane. This system is involved in glucose transport. In Staphylococcus aureus (strain bovine RF122 / ET3-1), this protein is PTS system glucose-specific EIICBA component (ptsG).